Reading from the N-terminus, the 156-residue chain is Cell division protein SepF (156 aa).

Belongs to the SepF family. In terms of assembly, homodimer. Interacts with FtsZ.

The protein localises to the cytoplasm. In terms of biological role, cell division protein that is part of the divisome complex and is recruited early to the Z-ring. Probably stimulates Z-ring formation, perhaps through the cross-linking of FtsZ protofilaments. Its function overlaps with FtsA. The chain is Cell division protein SepF from Ruminiclostridium cellulolyticum (strain ATCC 35319 / DSM 5812 / JCM 6584 / H10) (Clostridium cellulolyticum).